A 499-amino-acid polypeptide reads, in one-letter code: Neuronal acetylcholine receptor subunit alpha-7 (499 aa).

The N-terminal stretch at 1–19 is a signal peptide; sequence MRGSLCLALAASILHVSLQ. Over 20-230 the chain is Extracellular; that stretch reads GEFQRKLYKD…VSIRRRTLYY (211 aa). Residues Arg-39 and Val-41 each coordinate Ca(2+). 3 N-linked (GlcNAc...) asparagine glycosylation sites follow: Asn-43, Asn-87, and Asn-130. Cys-147 and Cys-161 are disulfide-bonded. Ser-169 and Tyr-207 together coordinate Ca(2+). Cys-209 and Cys-210 form a disulfide bridge. A run of 3 helical transmembrane segments spans residues 231-251, 259-279, and 292-312; these read GLNLLIPCVLISALALLVFLL, ISLGITVLLSLTVFMLLVAEI, and QYFASTMIIVGLSVVVTVIVL. The essential for TMEM35A/NACHO-mediated proper subunit assembly and trafficking to cell membrane stretch occupies residues 257–264; it reads EKISLGIT. At 313–466 the chain is on the cytoplasmic side; it reads QYHHHDPDGG…WKFAACVVDR (154 aa). The chain crosses the membrane as a helical span at residues 467 to 487; the sequence is LCLMAFSVFTILCTIGILMSA.

Belongs to the ligand-gated ion channel (TC 1.A.9) family. Acetylcholine receptor (TC 1.A.9.1) subfamily. Alpha-7/CHRNA7 sub-subfamily. In terms of assembly, homopentamer. Homooligomer of the short form gives rise to unfunctional channels, as does coexpression of both long and short forms of the receptor. Can also form heteropentamers with CHRNB2, mainly found in basal forebrain cholinergic neurons. Interacts with RIC3; which is required for proper folding and assembly. Interacts with LYPD6. Interacts with CANX. In terms of processing, glycosylations at Asn-43, Asn-87 and Asn-130 are essential for TMEM35A/NACHO-mediated proper subunit assembly and trafficking to the cell membrane. As to expression, at least in chromaffin cells.

It localises to the postsynaptic cell membrane. It is found in the cell membrane. The catalysed reaction is Ca(2+)(in) = Ca(2+)(out). The enzyme catalyses K(+)(in) = K(+)(out). It carries out the reaction Na(+)(in) = Na(+)(out). It catalyses the reaction choline(out) = choline(in). The catalysed reaction is NH4(+)(in) = NH4(+)(out). The enzyme catalyses L-arginine(in) = L-arginine(out). It carries out the reaction guanidine(out) = guanidine(in). Its activity is regulated as follows. Activated by a myriad of ligands such as acetylcholine, cytisine, nicotine, choline and epibatidine. Oligomeric amyloid-beta protein 42 activates specifially CHRNA7:CHRNB2 nAchRs. Activity is modulated by positive allosteric modulators (PAMs), such as flavonoids, with a wide range of chemical diversity, pharmacological sensitivity and efficacy. AChR activity is inhibited by the antagonists alpha-conotoxons RgIA, ImI and ImII, small disulfide-constrained peptides from cone snails. Alpha-conotoxin PnIC selectively inhibits CHRNA7:CHRNB2 over CHRNA7 homopentamer. In terms of biological role, component of neuronal acetylcholine receptors (nAChRs) that function as pentameric, ligand-gated cation channels with high calcium permeability among other activities. nAChRs are excitatory neurotrasnmitter receptors formed by a collection of nAChR subunits known to mediate synaptic transmission in the nervous system and the neuromuscular junction. Each nAchR subunit confers differential attributes to channel properties, including activation, deactivation and desensitization kinetics, pH sensitivity, cation permeability, and binding to allosteric modulators. CHRNA7 forms homopentameric neuronal acetylcholine receptors abundantly expressed in the central nervous system, characterized by fast desensitization and high calcium permeability. Also forms heteropentamers with CHRNB2, mainly expressed in basal forebrain cholinergic neurons. Involved in the modulation of calcium-dependent signaling pathways and influences the release of neurotransmitters, including dopamine, glutamate and GABA. Also expressed in non-neuronal cells such as immune cells like lymphocytes, monocytes and macrophages. In T cells, activation induces metabotropic signaling that results in an increase of intracellular Ca2+ concentrations, independent of ionotropic receptor functions. In macrophages, required for acetylcholine-mediated inhibition of TNF and other inflammatory cytokine release. Once activated by acetylcholine, nicotine or other agonists, selectively inhibits production of pro-inflammatory cytokines while leaving anti-inflammatory cytokines undisturbed. Stimulates the cholinergic anti-inflammatory pathway, controlling inflammation by inhibiting NFKB nuclear translocation and activating the JAK2-STAT3 pathway, independently of ion channel activity. Also expressed in the urothelium where it modulates reflex bladder activity by increasing intracellular calcium through internal stores and decreasing basal ATP release. This is Neuronal acetylcholine receptor subunit alpha-7 (CHRNA7) from Bos taurus (Bovine).